The chain runs to 214 residues: Osteoclast-stimulating factor 1 (214 aa).

In terms of domain architecture, SH3 spans 12 to 71 (GQVKVYRALFTFDPRTPDELYFEEGDILYISDTSDSNWWKGTCRGRTGLIPSNYVAEQAE). ANK repeat units lie at residues 72 to 101 (SIDN…GING), 105 to 135 (AGNT…ELNQ), and 139 to 168 (LGDT…RTDV).

Its subcellular location is the cytoplasm. Functionally, induces bone resorption, acting probably through a signaling cascade which results in the secretion of factor(s) enhancing osteoclast formation and activity. The polypeptide is Osteoclast-stimulating factor 1 (ostf1) (Danio rerio (Zebrafish)).